Reading from the N-terminus, the 777-residue chain is Acyl-homoserine lactone acylase PvdQ (777 aa).

Positions 1-25 (MIISRQLPSFCLAALFLSFSGGAHA) are cleaved as a signal peptide. Residues 196–218 (AGLPAEHWQLAAARQQRFALDRG) constitute a propeptide, spacer peptide. Catalysis depends on Ser-219, which acts as the Nucleophile.

The protein belongs to the peptidase S45 family. Heterodimer of an alpha subunit and a beta subunit processed from the same precursor.

It is found in the periplasm. It carries out the reaction an N-acyl-L-homoserine lactone + H2O = L-homoserine lactone + a carboxylate. Functionally, catalyzes the deacylation of acyl-homoserine lactone (AHL or acyl-HSL), releasing homoserine lactone (HSL) and the corresponding fatty acid. Possesses a specificity for the degradation of long-chain acyl-HSLs (side chains of 11 to 14 carbons in length). The polypeptide is Acyl-homoserine lactone acylase PvdQ (pvdQ) (Pseudomonas fluorescens (strain ATCC BAA-477 / NRRL B-23932 / Pf-5)).